The sequence spans 273 residues: MKAFNTSWADEVEADYVDGLPPSNEYIEGDYKYVTEYKFNDDGKKVKVVRTFKIEKQIVPKAVARRRSWVKFGDSLLDKPGPNSQTTMASEEIFMQFIGSKEFDQTHETQLDPGKNIAKCRICNGEHWSVNCPYKGTSMDSKTMMETKANAAAAAAVSDPSKMGKYVPPFMKDGGGGSGGKNWGRGRDRDDSSAVRISNLSESMTEADLEELVKKIGPHTKMYLAREKNTGLCKGFAYVHFKFRQDAAAAIEVLNGHGYDHLILCVEWSKPQP.

The segment at 168–192 (PPFMKDGGGGSGGKNWGRGRDRDDS) is disordered. Over residues 173 to 183 (DGGGGSGGKNW) the composition is skewed to gly residues. Residues 193–271 (SAVRISNLSE…LILCVEWSKP (79 aa)) form the RRM domain.

It belongs to the eIF-3 subunit G family. As to quaternary structure, component of the eukaryotic translation initiation factor 3 (eIF-3) complex. The eIF-3 complex interacts with pix.

It localises to the cytoplasm. Functionally, RNA-binding component of the eukaryotic translation initiation factor 3 (eIF-3) complex, which is involved in protein synthesis of a specialized repertoire of mRNAs and, together with other initiation factors, stimulates binding of mRNA and methionyl-tRNAi to the 40S ribosome. The eIF-3 complex specifically targets and initiates translation of a subset of mRNAs involved in cell proliferation. This subunit can bind 18S rRNA. The sequence is that of Eukaryotic translation initiation factor 3 subunit G-2 from Drosophila erecta (Fruit fly).